Reading from the N-terminus, the 74-residue chain is Putative membrane protein insertion efficiency factor (74 aa).

It belongs to the UPF0161 family.

Its subcellular location is the cell inner membrane. Functionally, could be involved in insertion of integral membrane proteins into the membrane. The sequence is that of Putative membrane protein insertion efficiency factor from Leptospira interrogans serogroup Icterohaemorrhagiae serovar copenhageni (strain Fiocruz L1-130).